Here is a 441-residue protein sequence, read N- to C-terminus: Pre-mRNA-splicing factor PRP46 (441 aa).

Disordered regions lie at residues 1-22 and 81-107; these read MPVA…NEPS and MGAS…LTNL. Residues 83–107 are compositionally biased toward polar residues; the sequence is ASSSALTKHTPSASQPTTHDSLTNL. 7 WD repeats span residues 130–169, 172–211, 214–253, 256–295, 298–336, 339–379, and 388–427; these read GHQG…LRLT, GHIM…VVRH, GHLS…PVVV, GHKS…TMTT, HHKK…LVLN, DQNA…QSTQ, and ESEN…TAES.

It belongs to the WD repeat PRL1/PRL2 family. Associated with the spliceosome.

It is found in the cytoplasm. The protein localises to the nucleus. In terms of biological role, involved in pre-mRNA splicing and required for cell cycle progression at G2/M. In Yarrowia lipolytica (strain CLIB 122 / E 150) (Yeast), this protein is Pre-mRNA-splicing factor PRP46 (PRP46).